Here is a 426-residue protein sequence, read N- to C-terminus: Glutamate-1-semialdehyde 2,1-aminomutase (426 aa).

Position 265 is an N6-(pyridoxal phosphate)lysine (Lys-265).

Belongs to the class-III pyridoxal-phosphate-dependent aminotransferase family. HemL subfamily. In terms of assembly, homodimer. The cofactor is pyridoxal 5'-phosphate.

The protein resides in the cytoplasm. The catalysed reaction is (S)-4-amino-5-oxopentanoate = 5-aminolevulinate. Its pathway is porphyrin-containing compound metabolism; protoporphyrin-IX biosynthesis; 5-aminolevulinate from L-glutamyl-tRNA(Glu): step 2/2. This is Glutamate-1-semialdehyde 2,1-aminomutase from Hahella chejuensis (strain KCTC 2396).